A 446-amino-acid chain; its full sequence is Probable glycine dehydrogenase (decarboxylating) subunit 1 (446 aa).

Belongs to the GcvP family. N-terminal subunit subfamily. The glycine cleavage system is composed of four proteins: P, T, L and H. In this organism, the P 'protein' is a heterodimer of two subunits.

The catalysed reaction is N(6)-[(R)-lipoyl]-L-lysyl-[glycine-cleavage complex H protein] + glycine + H(+) = N(6)-[(R)-S(8)-aminomethyldihydrolipoyl]-L-lysyl-[glycine-cleavage complex H protein] + CO2. The glycine cleavage system catalyzes the degradation of glycine. The P protein binds the alpha-amino group of glycine through its pyridoxal phosphate cofactor; CO(2) is released and the remaining methylamine moiety is then transferred to the lipoamide cofactor of the H protein. In Methylocella silvestris (strain DSM 15510 / CIP 108128 / LMG 27833 / NCIMB 13906 / BL2), this protein is Probable glycine dehydrogenase (decarboxylating) subunit 1.